Consider the following 241-residue polypeptide: Tetraspanin-1 (241 aa).

Residues 1–11 (MQCFSFIKTMM) are Cytoplasmic-facing. Residues 12–34 (ILFNLLIFLCGAALLAVGIWVSI) traverse the membrane as a helical segment. Residues 35-53 (DGASFLKIFGPLSSSAMQF) are Extracellular-facing. Residues 54 to 76 (VNVGYFLIAAGVVVFALGFLGCY) form a helical membrane-spanning segment. The Cytoplasmic portion of the chain corresponds to 77 to 88 (GAKTESKCALMT). Residues 89–111 (FFFILLLIFIAEVAAAVVALVYT) traverse the membrane as a helical segment. Topologically, residues 112 to 214 (TMAEHFLTLL…LYDIRTNAVT (103 aa)) are extracellular. N-linked (GlcNAc...) asparagine glycans are attached at residues Asn-141, Asn-154, Asn-178, and Asn-184. The helical transmembrane segment at 215-237 (VGGVAAGIGGLELAAMIVSMYLY) threads the bilayer. Residues 238-241 (CNLQ) are Cytoplasmic-facing.

Belongs to the tetraspanin (TM4SF) family. In terms of assembly, interacts with SLC19A2. Interacts with NTRK1/TRKA.

The protein localises to the lysosome membrane. In terms of biological role, structural component of specialized membrane microdomains known as tetraspanin-enriched microdomains (TERMs), which act as platforms for receptor clustering and signaling. Participates thereby in diverse biological functions such as cell signal transduction, adhesion, migration and protein trafficking. Regulates neuronal differentiation in response to NGF by facilitating NGF-mediated activation of NTRK1/TRKA receptor tyrosine kinase and subsequent downstream signaling pathways. Plays a role in the inhibition of TNFalpha-induced apoptosis. Mechanistically, inhibits the NF-kappa-B signaling pathway by blocking phosphorylation of CHUK. Also promotes the stability of the thiamine transporter 1/SLC19A2 in intestinal epithelial cells leading to an increase of thiamine uptake process. The sequence is that of Tetraspanin-1 (TSPAN1) from Pongo abelii (Sumatran orangutan).